Here is a 137-residue protein sequence, read N- to C-terminus: uncharacterized protein (137 aa).

The next 3 membrane-spanning stretches (helical) occupy residues 5-25 (ELLW…VLVI), 79-99 (IAAI…WGYY), and 109-129 (FALG…SILW).

The protein belongs to the MAPEG family.

Its subcellular location is the cell membrane. This is an uncharacterized protein from Synechocystis sp. (strain ATCC 27184 / PCC 6803 / Kazusa).